Consider the following 169-residue polypeptide: Cell division inhibitor SulA (169 aa).

Residues 106–112 (ALRTGNY) are ftsZ binding. A lon protease binding region spans residues 162–169 (KIHSNLYH).

It belongs to the SulA family. As to quaternary structure, interacts with FtsZ. Post-translationally, is rapidly cleaved and degraded by the Lon protease once DNA damage is repaired.

Component of the SOS system and an inhibitor of cell division. Accumulation of SulA causes rapid cessation of cell division and the appearance of long, non-septate filaments. In the presence of GTP, binds a polymerization-competent form of FtsZ in a 1:1 ratio, thus inhibiting FtsZ polymerization and therefore preventing it from participating in the assembly of the Z ring. This mechanism prevents the premature segregation of damaged DNA to daughter cells during cell division. This is Cell division inhibitor SulA from Shigella flexneri serotype 5b (strain 8401).